A 382-amino-acid polypeptide reads, in one-letter code: Protein shisa-9A (382 aa).

Positions 1–26 (MKWTVLLLEYFLVKVLVLLYSADGEA) are cleaved as a signal peptide. Topologically, residues 27–132 (QQLEGFIMLS…DPRHDPTKDK (106 aa)) are extracellular. N39 carries an N-linked (GlcNAc...) asparagine glycan. A helical membrane pass occupies residues 133-153 (TNLIVYIICGVVAIMALVGIF). Topologically, residues 154 to 382 (TKLGLEKAHR…VTNSKAEVTV (229 aa)) are cytoplasmic.

Belongs to the shisa family. SHISA9 subfamily. As to quaternary structure, component of some AMPA receptors (ionotropic glutamate receptors) complex.

Its subcellular location is the cell projection. It localises to the dendritic spine membrane. The protein resides in the synapse. Regulator of short-term neuronal synaptic plasticity in the dentate gyrus. Associates with AMPA receptors (ionotropic glutamate receptors) in synaptic spines and promotes AMPA receptor desensitization at excitatory synapses. The polypeptide is Protein shisa-9A (shisa9a) (Danio rerio (Zebrafish)).